We begin with the raw amino-acid sequence, 709 residues long: DNA ligase (709 aa).

The interval 1–20 is disordered; it reads MTATHRGAQADASAPAGPLP. NAD(+) contacts are provided by residues 52–56, 101–102, and E146; these read DAEYD and SL. K148 acts as the N6-AMP-lysine intermediate in catalysis. R169, E205, K322, and K346 together coordinate NAD(+). The Zn(2+) site is built by C440, C443, C458, and C464. The 87-residue stretch at 623-709 folds into the BRCT domain; it reads KAPAPLSGKT…AEAGAAPAQE (87 aa).

The protein belongs to the NAD-dependent DNA ligase family. LigA subfamily. The cofactor is Mg(2+). Mn(2+) is required as a cofactor.

It catalyses the reaction NAD(+) + (deoxyribonucleotide)n-3'-hydroxyl + 5'-phospho-(deoxyribonucleotide)m = (deoxyribonucleotide)n+m + AMP + beta-nicotinamide D-nucleotide.. DNA ligase that catalyzes the formation of phosphodiester linkages between 5'-phosphoryl and 3'-hydroxyl groups in double-stranded DNA using NAD as a coenzyme and as the energy source for the reaction. It is essential for DNA replication and repair of damaged DNA. The polypeptide is DNA ligase (Cupriavidus necator (strain ATCC 17699 / DSM 428 / KCTC 22496 / NCIMB 10442 / H16 / Stanier 337) (Ralstonia eutropha)).